The primary structure comprises 165 residues: MLHSALALCLLLITVSSNLAIAIKKEKRPPQTLSRGWGDDITWVQTYEEGLFHARKSNKPLMVIHHLEDCQYCQALKKEFAKNEEIQEMAQNDFIMLNLMHETTDKNLSPDGQYVPRIMFVDPSLTVRADITGRYSNRLYTYEPQDLPMLVDNMKKALRLIQSEL.

Positions 1–20 (MLHSALALCLLLITVSSNLA) are cleaved as a signal peptide. A Prevents secretion from ER motif is present at residues 162–165 (QSEL).

This sequence belongs to the AGR family. As to quaternary structure, interacts with LYPD3 and DAG1 (alphaDAG1). In terms of tissue distribution, expressed in the ciliated cells of the airway epithelium. Not detected in the mucous cells.

Its subcellular location is the endoplasmic reticulum. The protein resides in the cytoplasm. Its function is as follows. Required for calcium-mediated regulation of ciliary beat frequency and mucociliary clearance in the airway. Might be involved in the regulation of intracellular calcium in tracheal epithelial cells. This Mus musculus (Mouse) protein is Anterior gradient protein 3.